The chain runs to 404 residues: MTTVPDLESDSFHVDWYRTYAELRETAPVTPVRFLGQDAWLVTGYDEAKAALSDLRLSSDPKKKYPGVEVEFPAYLGFPEDVRNYFATNMGTSDPPTHTRLRKLVSQEFTVRRVEAMRPRVEQITAELLDEVGDSGVVDIVDRFAHPLPIKVICELLGVDEKYRGEFGRWSSEILVMDPERAEQRGQAAREVVNFILDLVERRRTEPGDDLLSALIRVQDDDDGRLSADELTSIALVLLLAGFEASVSLIGIGTYLLLTHPDQLALVRRDPSALPNAVEEILRYIAPPETTTRFAAEEVEIGGVAIPQYSTVLVANGAANRDPKQFPDPHRFDVTRDTRGHLSFGQGIHFCMGRPLAKLEGEVALRALFGRFPALSLGIDADDVVWRRSLLLRGIDHLPVRLDG.

Residue C351 coordinates heme.

This sequence belongs to the cytochrome P450 family. It depends on heme as a cofactor.

The protein resides in the cytoplasm. The enzyme catalyses 6-deoxyerythronolide B + 2 reduced [2Fe-2S]-[ferredoxin] + O2 + 2 H(+) = erythronolide B + 2 oxidized [2Fe-2S]-[ferredoxin] + H2O. It functions in the pathway antibiotic biosynthesis; erythromycin biosynthesis. Functionally, catalyzes the conversion of 6-deoxyerythronolide B (6-DEB) to erythronolide B (EB) by the insertion of an oxygen at the 6S position of 6-DEB. Requires the participation of a ferredoxin and a ferredoxin reductase for the transfer of electrons from NADPH to the monooxygenase. The sequence is that of 6-deoxyerythronolide B hydroxylase from Saccharopolyspora erythraea (strain ATCC 11635 / DSM 40517 / JCM 4748 / NBRC 13426 / NCIMB 8594 / NRRL 2338).